Consider the following 169-residue polypeptide: Actin-related protein 2/3 complex subunit 4 (169 aa).

This sequence belongs to the ARPC4 family. Component of the Arp2/3 complex composed of arpB/Arp2, arpC/Arp3, arcA/p41-arc, arcB/p34-arc, arcC/p21-arc, arcD/p20-arc and arcE/p16-arc. Interacts with carmil (via the region between the LRR domain and COOH-terminal proline-rich domain); carmil is required for Arp2/3-dependent actin nucleation. Arp2/3 complex, MyoB, MyoC, and the alpha and beta subunits of capping protein all form a larger complex with carmil.

The protein localises to the cytoplasm. Its subcellular location is the cytoskeleton. It is found in the cytosol. It localises to the cell cortex. The protein resides in the cell projection. The protein localises to the pseudopodium. Its function is as follows. Functions as a component of the Arp2/3 complex which is involved in regulation of actin polymerization and together with an activating nucleation-promoting factor (NPF) mediates the formation of branched actin networks. Seems to contact the pointed end of the daughter actin filament. The Arp2/3 complex is involved in organizing the actin system in cell motility and chemotaxis, in phagocytosis and macropinocytosis, at late steps of endosome processing, and in mitosis. In concert with a group of other proteins, the Arp2/3 complex plays a general role in the rapid activation and adaptation of the actin system to its multiple functions. This chain is Actin-related protein 2/3 complex subunit 4 (arcD), found in Dictyostelium discoideum (Social amoeba).